The chain runs to 401 residues: Elongation factor Tu 2 (401 aa).

The tr-type G domain occupies 10–209 (KPHVNVGTIG…AVDEYIPTPV (200 aa)). The segment at 19–26 (GHVDHGKT) is G1. 19-26 (GHVDHGKT) is a GTP binding site. Residue Thr-26 participates in Mg(2+) binding. The tract at residues 60–64 (GITIA) is G2. Residues 81–84 (DCPG) are G3. Residues 81–85 (DCPGH) and 136–139 (NKVD) contribute to the GTP site. A G4 region spans residues 136–139 (NKVD). The interval 174–176 (SAL) is G5.

The protein belongs to the TRAFAC class translation factor GTPase superfamily. Classic translation factor GTPase family. EF-Tu/EF-1A subfamily. In terms of assembly, monomer.

It is found in the cytoplasm. The enzyme catalyses GTP + H2O = GDP + phosphate + H(+). Its function is as follows. GTP hydrolase that promotes the GTP-dependent binding of aminoacyl-tRNA to the A-site of ribosomes during protein biosynthesis. The protein is Elongation factor Tu 2 of Roseiflexus castenholzii (strain DSM 13941 / HLO8).